The primary structure comprises 160 residues: Cytochrome b6-f complex subunit 4 (160 aa).

3 helical membrane passes run 36–56, 95–115, and 131–151; these read LLYIFPVCILGTIACCIGLGV, LLGVLSMAAVPIGLITVPFIE, and LVFLFGTFTAFWLGIGATMPI.

The protein belongs to the cytochrome b family. PetD subfamily. In terms of assembly, the 4 large subunits of the cytochrome b6-f complex are cytochrome b6, subunit IV (17 kDa polypeptide, petD), cytochrome f and the Rieske protein, while the 4 small subunits are petG, petL, petM and petN. The complex functions as a dimer.

The protein localises to the plastid. It is found in the chloroplast thylakoid membrane. Functionally, component of the cytochrome b6-f complex, which mediates electron transfer between photosystem II (PSII) and photosystem I (PSI), cyclic electron flow around PSI, and state transitions. This is Cytochrome b6-f complex subunit 4 from Emiliania huxleyi (Coccolithophore).